Consider the following 576-residue polypeptide: Proline--tRNA ligase (576 aa).

It belongs to the class-II aminoacyl-tRNA synthetase family. ProS type 1 subfamily. As to quaternary structure, homodimer.

The protein localises to the cytoplasm. The enzyme catalyses tRNA(Pro) + L-proline + ATP = L-prolyl-tRNA(Pro) + AMP + diphosphate. In terms of biological role, catalyzes the attachment of proline to tRNA(Pro) in a two-step reaction: proline is first activated by ATP to form Pro-AMP and then transferred to the acceptor end of tRNA(Pro). As ProRS can inadvertently accommodate and process non-cognate amino acids such as alanine and cysteine, to avoid such errors it has two additional distinct editing activities against alanine. One activity is designated as 'pretransfer' editing and involves the tRNA(Pro)-independent hydrolysis of activated Ala-AMP. The other activity is designated 'posttransfer' editing and involves deacylation of mischarged Ala-tRNA(Pro). The misacylated Cys-tRNA(Pro) is not edited by ProRS. The chain is Proline--tRNA ligase from Bordetella parapertussis (strain 12822 / ATCC BAA-587 / NCTC 13253).